Consider the following 761-residue polypeptide: 5-methyltetrahydropteroyltriglutamate--homocysteine methyltransferase (761 aa).

5-methyltetrahydropteroyltri-L-glutamate contacts are provided by residues 16–19 (RELK) and Lys116. Residues 437–439 (IGS) and Glu490 contribute to the L-homocysteine site. L-methionine-binding positions include 437–439 (IGS) and Glu490. 5-methyltetrahydropteroyltri-L-glutamate is bound by residues 521–522 (RC) and Trp567. Residue Asp605 participates in L-homocysteine binding. Asp605 is a binding site for L-methionine. Glu611 contributes to the 5-methyltetrahydropteroyltri-L-glutamate binding site. 3 residues coordinate Zn(2+): His647, Cys649, and Glu671. The active-site Proton donor is His700. Zn(2+) is bound at residue Cys732.

The protein belongs to the vitamin-B12 independent methionine synthase family. The cofactor is Zn(2+).

It catalyses the reaction 5-methyltetrahydropteroyltri-L-glutamate + L-homocysteine = tetrahydropteroyltri-L-glutamate + L-methionine. Its pathway is amino-acid biosynthesis; L-methionine biosynthesis via de novo pathway; L-methionine from L-homocysteine (MetE route): step 1/1. In terms of biological role, catalyzes the transfer of a methyl group from 5-methyltetrahydrofolate to homocysteine resulting in methionine formation. The protein is 5-methyltetrahydropteroyltriglutamate--homocysteine methyltransferase of Chromohalobacter salexigens (strain ATCC BAA-138 / DSM 3043 / CIP 106854 / NCIMB 13768 / 1H11).